Here is a 704-residue protein sequence, read N- to C-terminus: Polyribonucleotide nucleotidyltransferase (704 aa).

Positions 485 and 491 each coordinate Mg(2+). The KH domain maps to 552–611 (PRIYTMKIDPKKIKDVIGKGGATIRALTEETGTSIDIDDDGTVKIAAVDGNAVKTVMARI). The S1 motif domain maps to 621–689 (GAVYTGKVTR…RQGRIRLTMR (69 aa)).

It belongs to the polyribonucleotide nucleotidyltransferase family. Component of the RNA degradosome, which is a multiprotein complex involved in RNA processing and mRNA degradation. The cofactor is Mg(2+).

It localises to the cytoplasm. The enzyme catalyses RNA(n+1) + phosphate = RNA(n) + a ribonucleoside 5'-diphosphate. Functionally, involved in mRNA degradation. Catalyzes the phosphorolysis of single-stranded polyribonucleotides processively in the 3'- to 5'-direction. This Mannheimia succiniciproducens (strain KCTC 0769BP / MBEL55E) protein is Polyribonucleotide nucleotidyltransferase.